A 335-amino-acid polypeptide reads, in one-letter code: Fructose-1,6-bisphosphatase class 1 (335 aa).

The Mg(2+) site is built by Glu92, Asp114, Leu116, and Asp117. Residues 117 to 120 and Asn209 each bind substrate; that span reads DGSS. Glu281 serves as a coordination point for Mg(2+).

The protein belongs to the FBPase class 1 family. Homotetramer. It depends on Mg(2+) as a cofactor.

It localises to the cytoplasm. It carries out the reaction beta-D-fructose 1,6-bisphosphate + H2O = beta-D-fructose 6-phosphate + phosphate. It functions in the pathway carbohydrate biosynthesis; gluconeogenesis. This chain is Fructose-1,6-bisphosphatase class 1, found in Nitrosococcus oceani (strain ATCC 19707 / BCRC 17464 / JCM 30415 / NCIMB 11848 / C-107).